Consider the following 188-residue polypeptide: Elongation factor P (188 aa).

It belongs to the elongation factor P family.

It localises to the cytoplasm. The protein operates within protein biosynthesis; polypeptide chain elongation. Functionally, involved in peptide bond synthesis. Stimulates efficient translation and peptide-bond synthesis on native or reconstituted 70S ribosomes in vitro. Probably functions indirectly by altering the affinity of the ribosome for aminoacyl-tRNA, thus increasing their reactivity as acceptors for peptidyl transferase. The protein is Elongation factor P of Streptomyces avermitilis (strain ATCC 31267 / DSM 46492 / JCM 5070 / NBRC 14893 / NCIMB 12804 / NRRL 8165 / MA-4680).